The sequence spans 444 residues: Glutamate--tRNA ligase 2 (444 aa).

Positions 8–18 (PSPTGHLHAGN) match the 'HIGH' region motif. Residues 241-245 (KLSKR) carry the 'KMSKS' region motif. An ATP-binding site is contributed by Lys244.

The protein belongs to the class-I aminoacyl-tRNA synthetase family. Glutamate--tRNA ligase type 1 subfamily. In terms of assembly, monomer.

The protein resides in the cytoplasm. It carries out the reaction tRNA(Glu) + L-glutamate + ATP = L-glutamyl-tRNA(Glu) + AMP + diphosphate. Its function is as follows. Catalyzes the attachment of glutamate to tRNA(Glu) in a two-step reaction: glutamate is first activated by ATP to form Glu-AMP and then transferred to the acceptor end of tRNA(Glu). The polypeptide is Glutamate--tRNA ligase 2 (Acidiphilium cryptum (strain JF-5)).